We begin with the raw amino-acid sequence, 131 residues long: D-ribose pyranase (131 aa).

The Proton donor role is filled by His20. Residues Asp28, His98, and 120–122 (YCN) each bind substrate.

This sequence belongs to the RbsD / FucU family. RbsD subfamily. As to quaternary structure, homodecamer.

It localises to the cytoplasm. The enzyme catalyses beta-D-ribopyranose = beta-D-ribofuranose. The protein operates within carbohydrate metabolism; D-ribose degradation; D-ribose 5-phosphate from beta-D-ribopyranose: step 1/2. Its function is as follows. Catalyzes the interconversion of beta-pyran and beta-furan forms of D-ribose. The sequence is that of D-ribose pyranase from Coprothermobacter proteolyticus (strain ATCC 35245 / DSM 5265 / OCM 4 / BT).